A 175-amino-acid chain; its full sequence is Disulfide bond formation protein B (175 aa).

At 1–13 the chain is on the cytoplasmic side; it reads MSKLVTFSQQRSA. The helical transmembrane segment at 14–30 threads the bilayer; that stretch reads WLILMFSALGLEASALY. Topologically, residues 31–48 are periplasmic; sequence FQYVMLLDPCVMCIYIRV. A disulfide bond links cysteine 40 and cysteine 43. Residues 49 to 64 traverse the membrane as a helical segment; it reads AVLGLILAGLVGSIAP. Residues 65–71 lie on the Cytoplasmic side of the membrane; that stretch reads RFWIVRF. Residues 72–89 form a helical membrane-spanning segment; the sequence is LGMSLWGVSSAWGAKLSF. The Periplasmic portion of the chain corresponds to 90-144; sequence ELYQMQANPSPFSTCSFYPEFPTWMPLDAWMPSIFMPTGMCSDIPWTMMSLSMTQ. A disulfide bond links cysteine 104 and cysteine 130. The helical transmembrane segment at 145–163 threads the bilayer; it reads WTLIAFVGYSIAFLLFIYP. The Cytoplasmic portion of the chain corresponds to 164–175; the sequence is GLLYKKPTNPYS.

The protein belongs to the DsbB family.

The protein localises to the cell inner membrane. Required for disulfide bond formation in some periplasmic proteins. Acts by oxidizing the DsbA protein. In Shewanella denitrificans (strain OS217 / ATCC BAA-1090 / DSM 15013), this protein is Disulfide bond formation protein B.